The sequence spans 588 residues: Aspartate--tRNA ligase (588 aa).

Glutamate 174 contacts L-aspartate. The tract at residues 198-201 (QLFK) is aspartate. An L-aspartate-binding site is contributed by arginine 220. ATP is bound by residues 220 to 222 (RDE) and glutamine 229. An L-aspartate-binding site is contributed by histidine 448. Glutamate 482 lines the ATP pocket. Arginine 489 lines the L-aspartate pocket. ATP is bound at residue 534–537 (GIDR).

This sequence belongs to the class-II aminoacyl-tRNA synthetase family. Type 1 subfamily. Homodimer.

It localises to the cytoplasm. The enzyme catalyses tRNA(Asp) + L-aspartate + ATP = L-aspartyl-tRNA(Asp) + AMP + diphosphate. In terms of biological role, catalyzes the attachment of L-aspartate to tRNA(Asp) in a two-step reaction: L-aspartate is first activated by ATP to form Asp-AMP and then transferred to the acceptor end of tRNA(Asp). This is Aspartate--tRNA ligase from Xanthomonas oryzae pv. oryzae (strain MAFF 311018).